Here is a 652-residue protein sequence, read N- to C-terminus: uncharacterized protein (652 aa).

Basic and acidic residues-rich tracts occupy residues 1–13 (MSVT…TERK) and 641–652 (ATERTDNLADAA). Disordered stretches follow at residues 1 to 21 (MSVT…PAKT) and 628 to 652 (VPGW…ADAA).

The protein belongs to the ParB family.

This is an uncharacterized protein from Escherichia coli O157:H7.